The chain runs to 333 residues: Testin-2 (333 aa).

Positions 1-17 are cleaved as a signal peptide; the sequence is MIAVLFLAILCLEIDST. 3 cysteine pairs are disulfide-bonded: Cys-135–Cys-178, Cys-169–Cys-211, and Cys-269–Cys-322. N-linked (GlcNAc...) asparagine glycosylation occurs at Asn-173. Active-site residues include His-276 and Asn-300.

Belongs to the peptidase C1 family. In terms of tissue distribution, expressed in testis and ovary. Low level in spleen, epididymis, kidney, and uterus. Expressed in primary cultures of Sertoli cells.

It localises to the secreted. This chain is Testin-2, found in Mus musculus (Mouse).